The following is a 503-amino-acid chain: Cytochrome P450 11B2, mitochondrial (503 aa).

The N-terminal 24 residues, 1–24, are a transit peptide targeting the mitochondrion; sequence MALRAKAEVCVAAPWLSLQRARAL. Phenylalanine 381 contacts 21-hydroxyprogesterone. Cysteine 450 provides a ligand contact to heme.

The protein belongs to the cytochrome P450 family. Heme is required as a cofactor. In terms of tissue distribution, expressed sporadically in the zona glomerulosa (zG) of the adrenal cortex (conventional zonation), as well as in aldosterone-producing cell clusters (APCCs) composed of morphological zG cells in contact with the capsule (variegated zonation).

It localises to the mitochondrion inner membrane. The catalysed reaction is a steroid + 2 reduced [adrenodoxin] + O2 + 2 H(+) = an 11beta-hydroxysteroid + 2 oxidized [adrenodoxin] + H2O. It carries out the reaction 21-hydroxyprogesterone + 2 reduced [adrenodoxin] + O2 + 2 H(+) = corticosterone + 2 oxidized [adrenodoxin] + H2O. It catalyses the reaction corticosterone + 2 reduced [adrenodoxin] + O2 + 2 H(+) = 18-hydroxycorticosterone + 2 oxidized [adrenodoxin] + H2O. The enzyme catalyses 18-hydroxycorticosterone + 2 reduced [adrenodoxin] + O2 + 2 H(+) = aldosterone + 2 oxidized [adrenodoxin] + 2 H2O. The catalysed reaction is 11-deoxycortisol + 2 reduced [adrenodoxin] + O2 + 2 H(+) = cortisol + 2 oxidized [adrenodoxin] + H2O. It carries out the reaction 21-hydroxyprogesterone + 2 reduced [adrenodoxin] + O2 + 2 H(+) = 18-hydroxy-11-deoxycorticosterone + 2 oxidized [adrenodoxin] + H2O. It catalyses the reaction cortisol + 2 reduced [adrenodoxin] + O2 + 2 H(+) = 18-hydroxycortisol + 2 oxidized [adrenodoxin] + H2O. The enzyme catalyses 18-hydroxycortisol + 2 reduced [adrenodoxin] + O2 + 2 H(+) = 18-oxocortisol + 2 oxidized [adrenodoxin] + 2 H2O. It functions in the pathway steroid biosynthesis. Its function is as follows. A cytochrome P450 monooxygenase that catalyzes the biosynthesis of aldosterone, the main mineralocorticoid in the human body responsible for salt and water homeostasis, thus involved in blood pressure regulation, arterial hypertension, and the development of heart failure. Catalyzes three sequential oxidative reactions of 11-deoxycorticosterone (21-hydroxyprogesterone), namely 11-beta hydroxylation, followed by two successive oxidations at C18 yielding 18-hydroxy and then 18-oxo intermediates (that would not leave the enzyme active site during the consecutive hydroxylation reactions), ending with the formation of aldosterone. Can also produce 18-hydroxycortisol and 18-oxocortisol, derived from successive oxidations of cortisol at C18, normally found at very low levels, but significantly increased in primary aldosteronism, the most common form of secondary hypertension. Mechanistically, uses molecular oxygen inserting one oxygen atom into a substrate and reducing the second into a water molecule. Two electrons are provided by NADPH via a two-protein mitochondrial transfer system comprising flavoprotein FDXR (adrenodoxin/ferredoxin reductase) and nonheme iron-sulfur protein FDX1 or FDX2 (adrenodoxin/ferredoxin). Could also be involved in the androgen metabolic pathway. This chain is Cytochrome P450 11B2, mitochondrial, found in Homo sapiens (Human).